Here is a 344-residue protein sequence, read N- to C-terminus: Fructose-1,6-bisphosphatase class 1 (344 aa).

The Mg(2+) site is built by Glu-107, Asp-129, Leu-131, and Asp-132. Positions 224, 252, and 282 each coordinate substrate. Glu-288 lines the Mg(2+) pocket.

This sequence belongs to the FBPase class 1 family. In terms of assembly, homotetramer. Mg(2+) is required as a cofactor.

It is found in the cytoplasm. The enzyme catalyses beta-D-fructose 1,6-bisphosphate + H2O = beta-D-fructose 6-phosphate + phosphate. Its pathway is carbohydrate biosynthesis; Calvin cycle. This chain is Fructose-1,6-bisphosphatase class 1, found in Synechococcus sp. (strain ATCC 27144 / PCC 6301 / SAUG 1402/1) (Anacystis nidulans).